The following is a 387-amino-acid chain: Aminodeoxyfutalosine deaminase (387 aa).

Positions 1-10 are enriched in basic and acidic residues; that stretch reads MRPAYDDPRT. The disordered stretch occupies residues 1 to 37; it reads MRPAYDDPRTTDQPITRARPPPRAARGRRLGEEPLTE. Zn(2+) contacts are provided by histidine 61 and histidine 63. Substrate is bound by residues arginine 116, aspartate 183, and glycine 217. Position 244 (histidine 244) interacts with Zn(2+). The Proton donor role is filled by glutamate 247. Residue aspartate 325 coordinates Zn(2+).

This sequence belongs to the metallo-dependent hydrolases superfamily. Adenosine and AMP deaminases family. Zn(2+) is required as a cofactor.

The enzyme catalyses 6-amino-6-deoxyfutalosine + H2O + H(+) = futalosine + NH4(+). It participates in quinol/quinone metabolism; menaquinone biosynthesis. Functionally, catalyzes the deamination of aminodeoxyfutalosine (AFL) into futalosine (FL), a step in the biosynthesis of menaquinone (MK, vitamin K2). This is Aminodeoxyfutalosine deaminase from Streptomyces coelicolor (strain ATCC BAA-471 / A3(2) / M145).